A 134-amino-acid chain; its full sequence is Photosystem II lipoprotein Psb27 (134 aa).

The N-terminal stretch at 1 to 24 is a signal peptide; sequence MSFLKNQLSRLLALILVVAIGLTA. Cys-25 carries the N-palmitoyl cysteine lipid modification. Residue Cys-25 is the site of S-diacylglycerol cysteine attachment.

This sequence belongs to the Psb27 family. As to quaternary structure, monomer. Forms a complex with a monomeric, partially assembled PSII. This is probably the complex in which D1 is assembled and/or replaced. Present in 6-10% of PSII complexes; mostly in monomeric PSII. These PSII do not evolve oxygen, do not have an assembled calcium-manganese-oxide cluster. Psb27-containing PSII seem to be assembly intermediates; a wild-type strain includes the intrinsic membrane proteins, Psb27, Pbs28, substoichiometric amounts of PsbO and PsbQ but no PsbU or PsbV, while a ctpA deletion mutant includes the intrinsic membrane proteins (D1 as precursor), Psb27, a very low amount of PsbO and PsbQ, but no PsbU or PsbV. Small amounts of Psb27 interact with the lumenal domain of CP43 (psbC) in wild-type and a ctpA mutant. A small amount can also be detected in monomeric and trimeric photosystem I (PSI), possibly via association with PsaB.

The protein localises to the cellular thylakoid membrane. Its function is as follows. Plays a role in the repair and/or biogenesis of the calcium-manganese-oxide cluster on the lumenal face of the thylakoid membrane. Photosystem II (PSII) complexes containing this protein are monomeric, are assembly intermediates lacking the calcium-manganese-oxide cluster and miss some of the lumenal subunits. Probably blocks binding of some of the small lumenal subunits. The protein is Photosystem II lipoprotein Psb27 of Synechocystis sp. (strain ATCC 27184 / PCC 6803 / Kazusa).